The sequence spans 208 residues: Large ribosomal subunit protein uL3 (208 aa).

Belongs to the universal ribosomal protein uL3 family. As to quaternary structure, part of the 50S ribosomal subunit. Forms a cluster with proteins L14 and L19.

Its function is as follows. One of the primary rRNA binding proteins, it binds directly near the 3'-end of the 23S rRNA, where it nucleates assembly of the 50S subunit. The chain is Large ribosomal subunit protein uL3 from Desulfosudis oleivorans (strain DSM 6200 / JCM 39069 / Hxd3) (Desulfococcus oleovorans).